Reading from the N-terminus, the 282-residue chain is Lipoyl synthase (282 aa).

[4Fe-4S] cluster contacts are provided by C37, C42, C48, C63, C67, C70, and S274. The Radical SAM core domain occupies 49–263; it reads WGKGTATFMI…KTIGLEKGFS (215 aa).

The protein belongs to the radical SAM superfamily. Lipoyl synthase family. [4Fe-4S] cluster is required as a cofactor.

The protein resides in the cytoplasm. It carries out the reaction [[Fe-S] cluster scaffold protein carrying a second [4Fe-4S](2+) cluster] + N(6)-octanoyl-L-lysyl-[protein] + 2 oxidized [2Fe-2S]-[ferredoxin] + 2 S-adenosyl-L-methionine + 4 H(+) = [[Fe-S] cluster scaffold protein] + N(6)-[(R)-dihydrolipoyl]-L-lysyl-[protein] + 4 Fe(3+) + 2 hydrogen sulfide + 2 5'-deoxyadenosine + 2 L-methionine + 2 reduced [2Fe-2S]-[ferredoxin]. It functions in the pathway protein modification; protein lipoylation via endogenous pathway; protein N(6)-(lipoyl)lysine from octanoyl-[acyl-carrier-protein]: step 2/2. Its function is as follows. Catalyzes the radical-mediated insertion of two sulfur atoms into the C-6 and C-8 positions of the octanoyl moiety bound to the lipoyl domains of lipoate-dependent enzymes, thereby converting the octanoylated domains into lipoylated derivatives. The polypeptide is Lipoyl synthase (Bacteroides thetaiotaomicron (strain ATCC 29148 / DSM 2079 / JCM 5827 / CCUG 10774 / NCTC 10582 / VPI-5482 / E50)).